Reading from the N-terminus, the 385-residue chain is Deoxyguanosinetriphosphate triphosphohydrolase-like protein (385 aa).

The HD domain occupies 75 to 197 (RLTHTLEVGQ…VDAADALAYT (123 aa)).

Belongs to the dGTPase family. Type 2 subfamily.

The sequence is that of Deoxyguanosinetriphosphate triphosphohydrolase-like protein from Deinococcus geothermalis (strain DSM 11300 / CIP 105573 / AG-3a).